The sequence spans 250 residues: UPF0736 protein RBAM_011410 (250 aa).

Belongs to the UPF0736 family.

The sequence is that of UPF0736 protein RBAM_011410 from Bacillus velezensis (strain DSM 23117 / BGSC 10A6 / LMG 26770 / FZB42) (Bacillus amyloliquefaciens subsp. plantarum).